The primary structure comprises 967 residues: Translation initiation factor IF-2 (967 aa).

The interval Ala34–Pro363 is disordered. Composition is skewed to low complexity over residues Pro51–Ala96 and Ala103–Pro154. The segment covering Arg184 to Pro196 has biased composition (gly residues). Positions Gly197–Gly206 are enriched in low complexity. Gly residues predominate over residues Pro300–Gly333. A compositionally biased stretch (basic residues) spans Ala334–Lys345. In terms of domain architecture, tr-type G spans Pro460–Glu632. A G1 region spans residues Gly469–Thr476. Gly469 to Thr476 contacts GTP. The tract at residues Gly494 to His498 is G2. A G3 region spans residues Asp519–Gly522. Residues Asp519–His523 and Asn573–Asp576 contribute to the GTP site. Residues Asn573–Asp576 are G4. The G5 stretch occupies residues Ser609 to Arg611.

The protein belongs to the TRAFAC class translation factor GTPase superfamily. Classic translation factor GTPase family. IF-2 subfamily.

It localises to the cytoplasm. In terms of biological role, one of the essential components for the initiation of protein synthesis. Protects formylmethionyl-tRNA from spontaneous hydrolysis and promotes its binding to the 30S ribosomal subunits. Also involved in the hydrolysis of GTP during the formation of the 70S ribosomal complex. The protein is Translation initiation factor IF-2 of Kocuria rhizophila (strain ATCC 9341 / DSM 348 / NBRC 103217 / DC2201).